The following is a 248-amino-acid chain: PF03932 family protein CutC (248 aa).

This sequence belongs to the CutC family. As to quaternary structure, homodimer.

Its subcellular location is the cytoplasm. This chain is PF03932 family protein CutC, found in Escherichia coli O17:K52:H18 (strain UMN026 / ExPEC).